We begin with the raw amino-acid sequence, 1526 residues long: MYQDSGCSSSSSRRGSSSAAAATSTAATAAETAAAAAATTTSSSDEETLETLTIITTTITDSDIHATTTTTTVIASGTATTAAAAATTATLATLATLASNSDIEDSSPVESEDSEECEYIEIDCQTTAQEGTSPSGGSSSSGNAVLLQRSSNNLQQQQQQQQQQQQHLQLQLQQADERLLRKIGYIASRVRCLSKYYGDFRLVNPYSARRQRRQLQEILLRHSIFDPGKEHQRAIVLAAATAAIAGPLAAIDCVCGSSSISLEAVSSRSRSSELEDDHHEQDQVQEEQEQEQHQGDTEDNEEEQEHPSEKPERTDIEEEPPPAIAVTTTTTATVRRKSSSSSTISGTATVSGSVSVSASASQSFCSNNINLLEELLIQFYEEQDHRSNLTVIRHHHHQQHQQHQQQQRITNNNNNNNNCNSIQNNNNMSNPAATAAATATPSVEQPATSGTTNIHLQPTSLPDGSDNPRRRRASDCSAVQAALQNQLHCITLKNNNCGKAMPFHRGSCGAAGEHLLAANSIANRATIILSKSCSNVDGDATATAATALSSTVGGGIGGIGGSIKMRASATDIETNALNGARDAIVASNNGNNGNNGNNGNNEYSILQLNNTIIQCHFNDDDFRALVKDLKRKVEYTERMNWLCLSKRPLGPPHRKSSLPKHQEVKRRFLEICDTTFSEEVRAALRLPAFDSYEWSDADVIHLMQTMFVELGFIEKFSIPVDTLREWLYEVYKHYNEVPFHNFRHCFCVAQMMYAITRQANLLSRLGDLECLILLVSCICHDLDHPGYNNIYQINARTELALRYNDISPLENHHCSIAFRLLEHPECNIFKNFSRDTFNNIREGIIRCILATDMARHNEILTQFMEITPIFDYSNRAHINLLCMILIKVADISNEARPMDVAEPWLDRLLQEFFAQSAAEKSEGLPVTPFMDPDKVSKPGSQVRFIGLVLLPLFEALGELVPELTELIIIPVRIALEYYRRLNDAQTKTRKSVADSNTSATSDSNSGTIDSNAAMVSTPGGASDKLSLDKGQGNSQGSGGGGGGGGGGGAGGGTGSGCGSNAAGSVSPQMPRSGSGISVKSRRSIPSQKSASRTSVDEPGGMASELHDLPEGSESGDSETATEVDVAEKTSKFKVDTEGSSNRSKSSHSTSRKSSREKRPSMIGELCSSGGGQRIRNSYGNIHGYHSNRCHFGNNRAVSLDQYSSAGNNRRLSDGLPQVISDSNVFYGRHNRSSTETTVAVGNPQDTNANTNHPVGCQLKELLARTEADSDGEGDGNGREDKKIPLVIPSMPQLATSSNGNISPTLVVTEQILPSNGSTRSSASSGRGGSGVPGGSGGSGMPGPSAGSGSSWKSRLRQFSDYFSFSFDKSNKRFGSTRSSPCPGSNSSSGRTNNNANGLGENQDGLGAGGGIKPGMCCTTITNSSGSTVKGETRGGTAGAGGGALTTMTTGNDAHQRHRAYSLDVPGMMRYSSNDSSRHPSNNTLQSAGGGAGLTTGLEVTAQRVPPSLSVEMGLASGSSSEAGPKI.

Positions Met1–Ser43 are enriched in low complexity. Disordered regions lie at residues Met1–Thr48, Ser266–Ala348, and Arg393–Cys476. Basic and acidic residues-rich tracts occupy residues Arg270–Asp282 and Glu305–Thr314. 2 stretches are compositionally biased toward low complexity: residues Ile324–Ala348 and Gln401–Thr440. The segment covering Pro441 to Pro462 has biased composition (polar residues). The region spanning Val664–Gln985 is the PDEase domain. His740 (proton donor) is an active-site residue. His740–His744 is a binding site for 3',5'-cyclic GMP. His744, His780, Asp781, and Asp890 together coordinate Zn(2+). 3',5'-cyclic GMP is bound by residues Asp781 and Asp890. Residue Asp781 participates in Mg(2+) binding. Disordered regions lie at residues Thr986–Gly1170, Thr1265–Pro1284, Ser1314–Trp1351, Arg1372–Gly1406, and Arg1469–Gly1496. Residues Ala993–Ser1005 show a composition bias toward low complexity. Residues Asn1033–Cys1057 show a composition bias toward gly residues. Positions Val1065–Thr1093 are enriched in polar residues. A compositionally biased stretch (basic and acidic residues) spans Val1125–Thr1136. A compositionally biased stretch (low complexity) spans Ser1139–Ser1148. Over residues Ser1314–Ser1324 the composition is skewed to low complexity. Gly residues predominate over residues Gly1325–Met1340. 2 stretches are compositionally biased toward low complexity: residues Pro1341–Ser1350 and Ser1375–Gly1397. A compositionally biased stretch (polar residues) spans Tyr1470–Ser1486.

The protein belongs to the cyclic nucleotide phosphodiesterase family. PDE9 subfamily. It depends on Zn(2+) as a cofactor. The cofactor is Mg(2+). Expressed in Malpighian tubules and adult fly head.

It carries out the reaction 3',5'-cyclic GMP + H2O = GMP + H(+). The protein operates within purine metabolism; 3',5'-cyclic GMP degradation; GMP from 3',5'-cyclic GMP: step 1/1. In terms of biological role, specifically hydrolyzes the second messenger cGMP, which is a key regulator of many important physiological processes. Highly specific: compared to other members of the cyclic nucleotide phosphodiesterase family, has the highest affinity and selectivity for cGMP. In Drosophila melanogaster (Fruit fly), this protein is High affinity cGMP-specific 3',5'-cyclic phosphodiesterase 9A.